Here is a 274-residue protein sequence, read N- to C-terminus: Bis(5'-nucleosyl)-tetraphosphatase, symmetrical (274 aa).

It belongs to the Ap4A hydrolase family.

It carries out the reaction P(1),P(4)-bis(5'-adenosyl) tetraphosphate + H2O = 2 ADP + 2 H(+). Hydrolyzes diadenosine 5',5'''-P1,P4-tetraphosphate to yield ADP. This Erwinia tasmaniensis (strain DSM 17950 / CFBP 7177 / CIP 109463 / NCPPB 4357 / Et1/99) protein is Bis(5'-nucleosyl)-tetraphosphatase, symmetrical.